A 1021-amino-acid chain; its full sequence is Putative 115 kDa protein in type-1 retrotransposable element R1DM (1021 aa).

The Reverse transcriptase domain maps to 479-741; it reads RCIRLGYFPA…RSCRYLGITV (263 aa). The interval 955 to 971 is gag-like cysteine motif; it reads CACGDPYEDWMHILCAC.

The chain is Putative 115 kDa protein in type-1 retrotransposable element R1DM (R1A1-element\ORF2) from Drosophila melanogaster (Fruit fly).